The primary structure comprises 132 residues: Translation initiation factor 5A (132 aa).

Residue Lys36 is modified to Hypusine.

It belongs to the eIF-5A family.

The protein resides in the cytoplasm. In terms of biological role, functions by promoting the formation of the first peptide bond. In Desulfurococcus amylolyticus (strain DSM 18924 / JCM 16383 / VKM B-2413 / 1221n) (Desulfurococcus kamchatkensis), this protein is Translation initiation factor 5A (eIF5A).